Reading from the N-terminus, the 693-residue chain is Elongation factor G (693 aa).

The tr-type G domain occupies 8–282 (EKTRNIGIMA…AVIDYLPSPL (275 aa)). GTP is bound by residues 17–24 (AHVDAGKT), 81–85 (DTPGH), and 135–138 (NKMD).

Belongs to the TRAFAC class translation factor GTPase superfamily. Classic translation factor GTPase family. EF-G/EF-2 subfamily.

The protein localises to the cytoplasm. Its function is as follows. Catalyzes the GTP-dependent ribosomal translocation step during translation elongation. During this step, the ribosome changes from the pre-translocational (PRE) to the post-translocational (POST) state as the newly formed A-site-bound peptidyl-tRNA and P-site-bound deacylated tRNA move to the P and E sites, respectively. Catalyzes the coordinated movement of the two tRNA molecules, the mRNA and conformational changes in the ribosome. In Streptococcus pneumoniae serotype 2 (strain D39 / NCTC 7466), this protein is Elongation factor G.